A 354-amino-acid chain; its full sequence is RNA 3'-terminal phosphate cyclase (354 aa).

Residues Gln-100 and 290-293 (HMGD) contribute to the ATP site. His-316 acts as the Tele-AMP-histidine intermediate in catalysis.

It belongs to the RNA 3'-terminal cyclase family. Type 1 subfamily.

Its subcellular location is the cytoplasm. It catalyses the reaction a 3'-end 3'-phospho-ribonucleotide-RNA + ATP = a 3'-end 2',3'-cyclophospho-ribonucleotide-RNA + AMP + diphosphate. Catalyzes the conversion of 3'-phosphate to a 2',3'-cyclic phosphodiester at the end of RNA. The mechanism of action of the enzyme occurs in 3 steps: (A) adenylation of the enzyme by ATP; (B) transfer of adenylate to an RNA-N3'P to produce RNA-N3'PP5'A; (C) and attack of the adjacent 2'-hydroxyl on the 3'-phosphorus in the diester linkage to produce the cyclic end product. The biological role of this enzyme is unknown but it is likely to function in some aspects of cellular RNA processing. This chain is RNA 3'-terminal phosphate cyclase, found in Caldivirga maquilingensis (strain ATCC 700844 / DSM 13496 / JCM 10307 / IC-167).